Consider the following 636-residue polypeptide: Eukaryotic peptide chain release factor GTP-binding subunit ERF3A (636 aa).

Gly residues-rich tracts occupy residues 1-16 (MDPS…GGGS) and 103-116 (AAGG…GAGG). Disordered regions lie at residues 1 to 54 (MDPS…AAVA) and 90 to 206 (LRGP…PPGA). Residues 121 to 138 (VESSQDQSCEGSNSTVSM) show a composition bias toward polar residues. Acidic residues predominate over residues 183 to 193 (STQEMMEEEEE). Residues 209–435 (KEHVNVVFIG…DNLPNFNRSV (227 aa)) form the tr-type G domain. The tract at residues 218-225 (GHVDAGKS) is G1. GTP is bound at residue 221–226 (DAGKST). The tract at residues 274 to 278 (GKTVE) is G2. A G3 region spans residues 295 to 298 (DAPG). Residues 357 to 360 (NKMD) and 399 to 401 (SGL) each bind GTP. Residues 357–360 (NKMD) form a G4 region. A G5 region spans residues 399-401 (SGL).

This sequence belongs to the TRAFAC class translation factor GTPase superfamily. Classic translation factor GTPase family. ERF3 subfamily. In terms of assembly, component of the eRF1-eRF3-GTP ternary complex, composed of ETF1/ERF1 and ERF3 (GSPT1/ERF3A or GSPT2/ERF3B) and GTP. Component of the transient SURF (SMG1-UPF1-eRF1-eRF3) complex. The ETF1-GSPT1 complex interacts with JMJD4. Interacts with PABPC1. Interacts with SHFL.

It carries out the reaction GTP + H2O = GDP + phosphate + H(+). In terms of biological role, GTPase component of the eRF1-eRF3-GTP ternary complex, a ternary complex that mediates translation termination in response to the termination codons UAA, UAG and UGA. GSPT1/ERF3A mediates ETF1/ERF1 delivery to stop codons: The eRF1-eRF3-GTP complex binds to a stop codon in the ribosomal A-site. GTP hydrolysis by GSPT1/ERF3A induces a conformational change that leads to its dissociation, permitting ETF1/ERF1 to accommodate fully in the A-site. Component of the transient SURF complex which recruits UPF1 to stalled ribosomes in the context of nonsense-mediated decay (NMD) of mRNAs containing premature stop codons. Required for SHFL-mediated translation termination which inhibits programmed ribosomal frameshifting (-1PRF) of mRNA from viruses and cellular genes. In Mus musculus (Mouse), this protein is Eukaryotic peptide chain release factor GTP-binding subunit ERF3A (Gspt1).